A 198-amino-acid polypeptide reads, in one-letter code: MSLNIHVIKDKILSENWFVLRNMTYELTRADGSVVRHKREVYDRGNGATVLLYNRHKQTVVLVRQFRVATWVNGNHDGMLIETCAGLLDNDEPEACIRKEAVEETGYEVGEVRKLFELFMSPGGVTEVVHFFIAEYSDAQRTTSGGGVDDEAIEVLELPFSQALQMVADGEIRDGKAVILLQYLQTSGLMSGNSDKSD.

GDP-alpha-D-mannose contacts are provided by residues 38 to 40 (KRE), R67, and 85 to 87 (AGL). The Nudix hydrolase domain occupies 43 to 180 (DRGNGATVLL…EIRDGKAVIL (138 aa)). Residues A85, E100, and E104 each contribute to the Mg(2+) site. The short motif at 86-106 (GLLDNDEPEACIRKEAVEETG) is the Nudix box element. GDP-alpha-D-mannose is bound by residues E104, E127, 150-151 (DE), and K176. E151 is a Mg(2+) binding site.

This sequence belongs to the Nudix hydrolase family. NudK subfamily. In terms of assembly, homodimer. Mg(2+) serves as cofactor.

It carries out the reaction GDP-alpha-D-mannose + H2O = alpha-D-mannose 1-phosphate + GMP + 2 H(+). In terms of biological role, nucleoside diphosphate sugar hydrolase that hydrolyzes GDP-mannose as its preferred substrate, yielding GMP and mannose-1-phosphate. This Klebsiella pneumoniae subsp. pneumoniae (strain ATCC 700721 / MGH 78578) protein is GDP-mannose pyrophosphatase (nudK).